A 226-amino-acid chain; its full sequence is MASTDEPGVGSGDPTARARQAEAIVNHAEHSISEDAIVAAARERAVDIGAGAVSPAVGALLCVLAKLTGARAVVEVGTGAGVSGLWLLSGMREDGVLTTIDVEPEHQRIAKQAFSEAGVGPGRTRLISGRAQEVLTRLADESYDLVFIDAAPADQPHFVTEGVRLLRPGGAIVVHRAALGGRAGDATAKDSEVAAVREAARLIAEDDRLTPVLIPLGDGLLAAARD.

Residues Val53, Glu75, Gly77 to Thr78, Ser83, Asp101, and Val102 contribute to the S-adenosyl-L-methionine site. Asp149 provides a ligand contact to substrate.

Belongs to the class I-like SAM-binding methyltransferase superfamily. Cation-dependent O-methyltransferase family.

This is Putative O-methyltransferase Mvan_4497 from Mycolicibacterium vanbaalenii (strain DSM 7251 / JCM 13017 / BCRC 16820 / KCTC 9966 / NRRL B-24157 / PYR-1) (Mycobacterium vanbaalenii).